A 119-amino-acid chain; its full sequence is Basic phospholipase A2 (119 aa).

7 disulfides stabilise this stretch: cysteine 11-cysteine 72, cysteine 27-cysteine 118, cysteine 29-cysteine 45, cysteine 44-cysteine 100, cysteine 51-cysteine 93, cysteine 61-cysteine 86, and cysteine 79-cysteine 91. 3 residues coordinate Ca(2+): tyrosine 28, glycine 30, and glycine 32. The active site involves histidine 48. Aspartate 49 contacts Ca(2+). A glycan (N-linked (GlcNAc...) asparagine) is linked at asparagine 82. Aspartate 94 is a catalytic residue.

Belongs to the phospholipase A2 family. Group I subfamily. D49 sub-subfamily. The cofactor is Ca(2+). As to expression, expressed by the venom gland.

It localises to the secreted. The catalysed reaction is a 1,2-diacyl-sn-glycero-3-phosphocholine + H2O = a 1-acyl-sn-glycero-3-phosphocholine + a fatty acid + H(+). Functionally, snake venom phospholipase A2 (PLA2) that shows weak myotoxicity and induces edema in mice. Shows no cytotoxicity in vitro. Has an anticoagulant effect in vitro. PLA2 catalyzes the calcium-dependent hydrolysis of the 2-acyl groups in 3-sn-phosphoglycerides. This chain is Basic phospholipase A2, found in Micrurus mipartitus (Red-tailed coral snake).